The sequence spans 263 residues: Sulfur carrier protein FdhD (263 aa).

Cys107 (cysteine persulfide intermediate) is an active-site residue.

The protein belongs to the FdhD family.

The protein resides in the cytoplasm. Functionally, required for formate dehydrogenase (FDH) activity. Acts as a sulfur carrier protein that transfers sulfur from IscS to the molybdenum cofactor prior to its insertion into FDH. The chain is Sulfur carrier protein FdhD from Geobacillus kaustophilus (strain HTA426).